The sequence spans 255 residues: Dehydrogenase/reductase SDR family member 11 (255 aa).

Residues 1-23 form the signal peptide; sequence MERWTGRVALVTGASVGIGAAVA. NADP(+) contacts are provided by residues 13 to 18, 38 to 39, glutamate 44, 65 to 66, and asparagine 92; these read GASVGI, RS, and DL. Substrate contacts are provided by serine 146 and tyrosine 161. Residues tyrosine 161, lysine 165, 196 to 199, and lysine 203 contribute to the NADP(+) site; that span reads VETG. Tyrosine 161 acts as the Proton acceptor in catalysis.

This sequence belongs to the short-chain dehydrogenases/reductases (SDR) family.

It is found in the secreted. It catalyses the reaction a 3beta-hydroxysteroid + NADP(+) = a 3-oxosteroid + NADPH + H(+). It carries out the reaction 17beta-estradiol + NAD(+) = estrone + NADH + H(+). The enzyme catalyses 17beta-estradiol + NADP(+) = estrone + NADPH + H(+). The protein operates within steroid biosynthesis; estrogen biosynthesis. With respect to regulation, inhibited by flavonoids including apigenin, luteolin, genistein, kaempferol and quercetin and also by carbenoxolone, zearalenone, glycyrrhetinic, curcumin and flufenamic acid. Catalyzes the conversion of the 17-keto group of estrone, 4- and 5-androstenes and 5-alpha-androstanes into their 17-beta-hydroxyl metabolites and the conversion of the 3-keto group of 3-, 3,17- and 3,20- diketosteroids into their 3-hydroxyl metabolites. Exhibits reductive 3-beta-hydroxysteroid dehydrogenase activity toward 5-beta-androstanes, 5-beta-pregnanes, 4-pregnenes and bile acids. May also reduce endogenous and exogenous alpha-dicarbonyl compounds and xenobiotic alicyclic ketones. The polypeptide is Dehydrogenase/reductase SDR family member 11 (DHRS11) (Gallus gallus (Chicken)).